A 451-amino-acid polypeptide reads, in one-letter code: GTPase Der (451 aa).

2 consecutive EngA-type G domains span residues 5–170 and 186–359; these read PVVA…VAPP and IKLA…AAAF. Residues 11 to 18, 58 to 62, 122 to 125, 192 to 199, 239 to 243, and 304 to 307 each bind GTP; these read GRPNVGKS, DTGGF, NKAE, DTAGL, and NKWD. In terms of domain architecture, KH-like spans 360-444; that stretch reads AKLSTPRLTR…PLRIEFKSSR (85 aa).

This sequence belongs to the TRAFAC class TrmE-Era-EngA-EngB-Septin-like GTPase superfamily. EngA (Der) GTPase family. As to quaternary structure, associates with the 50S ribosomal subunit.

Its function is as follows. GTPase that plays an essential role in the late steps of ribosome biogenesis. The chain is GTPase Der from Bordetella bronchiseptica (strain ATCC BAA-588 / NCTC 13252 / RB50) (Alcaligenes bronchisepticus).